The sequence spans 269 residues: Expansin-B9 (269 aa).

The N-terminal stretch at 1–24 is a signal peptide; that stretch reads MGSLTTNIVLAVAVVAALVGGGSC. N34 is a glycosylation site (N-linked (GlcNAc...) asparagine). In terms of domain architecture, Expansin-like EG45 spans 63–169; that stretch reads GGACGIKNVN…RRVRCKYPGG (107 aa). 3 disulfide bridges follow: C66/C94, C97/C164, and C102/C108. The 82-residue stretch at 183-264 folds into the Expansin-like CBD domain; the sequence is NYLAVLVKFV…NWMPDAIYVS (82 aa).

This sequence belongs to the expansin family. Expansin B subfamily.

Its subcellular location is the secreted. The protein localises to the cell wall. It is found in the membrane. May cause loosening and extension of plant cell walls by disrupting non-covalent bonding between cellulose microfibrils and matrix glucans. No enzymatic activity has been found. May be required for rapid internodal elongation in deepwater rice during submergence. This chain is Expansin-B9 (EXPB9), found in Oryza sativa subsp. japonica (Rice).